Here is an 811-residue protein sequence, read N- to C-terminus: Probable phosphoketolase (811 aa).

Belongs to the XFP family. Requires thiamine diphosphate as cofactor.

The polypeptide is Probable phosphoketolase (Methylococcus capsulatus (strain ATCC 33009 / NCIMB 11132 / Bath)).